The following is a 776-amino-acid chain: Heat shock protein 110 (776 aa).

Residues 741 to 776 form a disordered region; that stretch reads ILNKKKPAAPAPPKKEEPQPAAGDQPQSQPGEMDVD.

This sequence belongs to the heat shock protein 70 family.

The protein is Heat shock protein 110 of Caenorhabditis elegans.